Reading from the N-terminus, the 628-residue chain is Chaperone protein HtpG (628 aa).

Positions 1–340 are a; substrate-binding; that stretch reads MKGQETRGFQ…SNDLPLNVSR (340 aa). Positions 341–556 are b; the sequence is EILQDSRVTQ…ADDMTTQMAK (216 aa). Residues 557-628 are c; that stretch reads LFAAAGQAAP…IRRMNQLLNA (72 aa).

Belongs to the heat shock protein 90 family. In terms of assembly, homodimer.

It localises to the cytoplasm. Functionally, molecular chaperone. Has ATPase activity. This chain is Chaperone protein HtpG, found in Sodalis glossinidius (strain morsitans).